Reading from the N-terminus, the 370-residue chain is MRNLDFIDSFIPTEGKYIRVMDFYNSEYPFCIHAPSAPNGDIMTEICSRENNQYFIFFPTDDGRVIIANRHNGSVFTGEATSVVSDIYTGSPLQFFREVKRTMETYYLAIQNPESATDVRALEPHSHELPSRLYYTNNIENNSNILISNKEQIYLTLPSLPENEQYPKTPVLSGIDDIGPNQSEKSIIGSTLIPCIMVSDFISLGERMKTTPYYYVKHTQYWQSMWSALFPPGSKETKTEKSGITDTSQISMTDGINVSIGADFGLRFGNKTFGIKGGFTYDTKTQITNTSQLLIETTYTREYTNTENFPVRYTGYVLASEFTLHRSDGTQVNTIPWVALNDNYTTIARYPHFASEPLLGNTKIITDDQN.

A propeptide spanning residues 1–6 (MRNLDF) is cleaved from the precursor. The segment at 1–155 (MRNLDFIDSF…LISNKEQIYL (155 aa)) is beta-trefoil domain. An intrachain disulfide couples Cys-31 to Cys-47. Residues 156–370 (TLPSLPENEQ…NTKIITDDQN (215 aa)) are pore-forming domain.

Belongs to the toxin_10 family. In terms of assembly, forms a heterodimer with BinB. Post-translationally, processed by proteases in the mosquito gut, probably at both the N- and C-termini.

It is found in the spore. Its subcellular location is the perispore. Functionally, component of a binary toxin active against Culex and some Aedes mosquito larvae; mortality towards both C.quinquefasciatus and A.atropalpus is maximal by 48 hours. A.aegypti is not very susceptible to this toxin. Binary toxin internalization into host gut cells requires both proteins. The chain is Binary larvicide subunit BinA (binA) from Lysinibacillus sphaericus (Bacillus sphaericus).